The sequence spans 243 residues: DNA repair protein RecO (243 aa).

Belongs to the RecO family.

Its function is as follows. Involved in DNA repair and RecF pathway recombination. This chain is DNA repair protein RecO, found in Xylella fastidiosa (strain M23).